Reading from the N-terminus, the 498-residue chain is ATP synthase subunit beta, chloroplastic (498 aa).

172 to 179 (GGAGVGKT) contacts ATP.

Belongs to the ATPase alpha/beta chains family. As to quaternary structure, F-type ATPases have 2 components, CF(1) - the catalytic core - and CF(0) - the membrane proton channel. CF(1) has five subunits: alpha(3), beta(3), gamma(1), delta(1), epsilon(1). CF(0) has four main subunits: a(1), b(1), b'(1) and c(9-12).

It localises to the plastid. Its subcellular location is the chloroplast thylakoid membrane. It catalyses the reaction ATP + H2O + 4 H(+)(in) = ADP + phosphate + 5 H(+)(out). Produces ATP from ADP in the presence of a proton gradient across the membrane. The catalytic sites are hosted primarily by the beta subunits. This is ATP synthase subunit beta, chloroplastic from Calamus usitatus (Palm tree).